Consider the following 147-residue polypeptide: Large ribosomal subunit protein bL9 (147 aa).

The protein belongs to the bacterial ribosomal protein bL9 family.

Functionally, binds to the 23S rRNA. The protein is Large ribosomal subunit protein bL9 of Halothermothrix orenii (strain H 168 / OCM 544 / DSM 9562).